The chain runs to 392 residues: Serpin B11 (392 aa).

Residues 341-365 (EEGTEAAAATGDSIAVKSLPMRAQF) form an RCL region.

The protein belongs to the serpin family. Ov-serpin subfamily. In terms of tissue distribution, detected in a restricted number of tissues, including lung, placenta, prostate, and tonsil.

The protein resides in the cytoplasm. In terms of biological role, has no serine protease inhibitory activity, probably due to variants in the scaffold impairing conformational change. This Homo sapiens (Human) protein is Serpin B11 (SERPINB11).